A 728-amino-acid polypeptide reads, in one-letter code: MAGFWVGTAPLVAAGRRGRWPPQQLMLSAALRTLKHVLYYSRQCLMVSRNLGSVGYDPNEKTFDKILVANRGEIACRVIRTCKKMGIKTVAIHSDVDASSVHVKMADEAVCVGPAPTSKSYLNMDAIMEAIKKTRAQAVHPGYGFLSENKEFARCLAAEDVVFIGPDTHAIQAMGDKIESKLLAKKAEVNTIPGFDGVVKDAEEAVRIAREIGYPVMIKASAGGGGKGMRIAWDDEETRDGFRLSSQEAASSFGDDRLLIEKFIDNPRHIEIQVLGDKHGNALWLNERECSIQRRNQKVVEEAPSIFLDAETRRAMGEQAVALARAVKYSSAGTVEFLVDSKKNFYFLEMNTRLQVEHPVTECITGLDLVQEMIRVAKGYPLRHKQADIRINGWAVECRVYAEDPYKSFGLPSIGRLSQYQEPLHLPGVRVDSGIQPGSDISIYYDPMISKLITYGSDRTEALKRMADALDNYVIRGVTHNIALLREVIINSRFVKGDISTKFLSDVYPDGFKGHMLTKSEKNQLLAIASSLFVAFQLRAQHFQENSRMPVIKPDIANWELSVKLHDKVHTVVASNNGSVFSVEVDGSKLNVTSTWNLASPLLSVSVDGTQRTVQCLSREAGGNMSIQFLGTVYKVNILTRLAAELNKFMLEKVTEDTSSVLRSPMPGVVVAVSVKPGDAVAEGQEICVIEAMKMQNSMTAGKTGTVKSVHCQAGDTVGEGDLLVELE.

The transit peptide at 1 to 52 (MAGFWVGTAPLVAAGRRGRWPPQQLMLSAALRTLKHVLYYSRQCLMVSRNLG) directs the protein to the mitochondrion. A Biotin carboxylation domain is found at 62 to 509 (TFDKILVANR…STKFLSDVYP (448 aa)). K65 carries the N6-acetyllysine; alternate modification. K65 bears the N6-succinyllysine; alternate mark. N6-succinyllysine is present on K119. K150 bears the N6-acetyllysine; alternate mark. The residue at position 150 (K150) is an N6-succinyllysine; alternate. K177 is a binding site for ATP. The ATP-grasp domain maps to 181–378 (KLLAKKAEVN…LVQEMIRVAK (198 aa)). Position 200 is an N6-acetyllysine; alternate (K200). At K200 the chain carries N6-succinyllysine; alternate. Residues 209–270 (AREI…PRHI), E261, and N296 each bind ATP. Phosphoserine is present on S252. An N6-succinyllysine modification is found at K262. K328 is subject to N6-acetyllysine; alternate. K328 carries the N6-succinyllysine; alternate modification. The Mg(2+) site is built by E336, E349, and N351. Residues E336, E349, and N351 each coordinate Mn(2+). E349 is an active-site residue. 2 positions are modified to N6-succinyllysine: K385 and K407. F409 lines the biotin pocket. K496 bears the N6-acetyllysine mark. N6-succinyllysine is present on residues K502, K513, and K648. The region spanning 653–728 (KVTEDTSSVL…GEGDLLVELE (76 aa)) is the Biotinyl-binding domain. Residue K694 is modified to N6-biotinyllysine; by HLCS.

The holoenzyme is a dodecamer composed of 6 PCCA/alpha subunits and 6 PCCB/beta subunits. Interacts (via the biotin carboxylation domain) with SIRT4. Interacts with SIRT3 and SIRT5. Requires Mg(2+) as cofactor. The cofactor is Mn(2+). It depends on biotin as a cofactor. In terms of processing, acetylated. The biotin cofactor is covalently attached to the C-terminal biotinyl-binding domain and is required for the catalytic activity. Biotinylation is catalyzed by HLCS.

It localises to the mitochondrion matrix. The enzyme catalyses propanoyl-CoA + hydrogencarbonate + ATP = (S)-methylmalonyl-CoA + ADP + phosphate + H(+). It carries out the reaction butanoyl-CoA + hydrogencarbonate + ATP = (2S)-ethylmalonyl-CoA + ADP + phosphate + H(+). It participates in metabolic intermediate metabolism; propanoyl-CoA degradation; succinyl-CoA from propanoyl-CoA: step 1/3. This is one of the 2 subunits of the biotin-dependent propionyl-CoA carboxylase (PCC), a mitochondrial enzyme involved in the catabolism of odd chain fatty acids, branched-chain amino acids isoleucine, threonine, methionine, and valine and other metabolites. Propionyl-CoA carboxylase catalyzes the carboxylation of propionyl-CoA/propanoyl-CoA to D-methylmalonyl-CoA/(S)-methylmalonyl-CoA. Within the holoenzyme, the alpha subunit catalyzes the ATP-dependent carboxylation of the biotin carried by the biotin carboxyl carrier (BCC) domain, while the beta subunit then transfers the carboxyl group from carboxylated biotin to propionyl-CoA. Propionyl-CoA carboxylase also significantly acts on butyryl-CoA/butanoyl-CoA, which is converted to ethylmalonyl-CoA/(2S)-ethylmalonyl-CoA at a much lower rate. Other alternative minor substrates include (2E)-butenoyl-CoA/crotonoyl-CoA. This chain is Propionyl-CoA carboxylase alpha chain, mitochondrial, found in Homo sapiens (Human).